Reading from the N-terminus, the 659-residue chain is 1,4-alpha-glucan branching enzyme GlgB 2 (659 aa).

The disordered stretch occupies residues Met1–Ser26. The active-site Nucleophile is Asp337. The active-site Proton donor is Glu390.

This sequence belongs to the glycosyl hydrolase 13 family. GlgB subfamily. Monomer.

It catalyses the reaction Transfers a segment of a (1-&gt;4)-alpha-D-glucan chain to a primary hydroxy group in a similar glucan chain.. Its pathway is glycan biosynthesis; glycogen biosynthesis. In terms of biological role, catalyzes the formation of the alpha-1,6-glucosidic linkages in glycogen by scission of a 1,4-alpha-linked oligosaccharide from growing alpha-1,4-glucan chains and the subsequent attachment of the oligosaccharide to the alpha-1,6 position. The polypeptide is 1,4-alpha-glucan branching enzyme GlgB 2 (Clostridium perfringens (strain SM101 / Type A)).